Reading from the N-terminus, the 98-residue chain is Large ribosomal subunit protein bL21 (98 aa).

The protein belongs to the bacterial ribosomal protein bL21 family. In terms of assembly, part of the 50S ribosomal subunit. Contacts protein L20.

This protein binds to 23S rRNA in the presence of protein L20. This chain is Large ribosomal subunit protein bL21, found in Aquifex aeolicus (strain VF5).